A 212-amino-acid polypeptide reads, in one-letter code: Uracil phosphoribosyltransferase (212 aa).

5-phospho-alpha-D-ribose 1-diphosphate is bound by residues Arg-78, Arg-103, and 130 to 138 (DPMLATGGS). Uracil-binding positions include Ile-193 and 198 to 200 (GDA). Asp-199 is a binding site for 5-phospho-alpha-D-ribose 1-diphosphate.

It belongs to the UPRTase family. It depends on Mg(2+) as a cofactor.

The enzyme catalyses UMP + diphosphate = 5-phospho-alpha-D-ribose 1-diphosphate + uracil. Its pathway is pyrimidine metabolism; UMP biosynthesis via salvage pathway; UMP from uracil: step 1/1. Its activity is regulated as follows. Allosterically activated by GTP. Functionally, catalyzes the conversion of uracil and 5-phospho-alpha-D-ribose 1-diphosphate (PRPP) to UMP and diphosphate. In Azotobacter vinelandii (strain DJ / ATCC BAA-1303), this protein is Uracil phosphoribosyltransferase.